A 189-amino-acid chain; its full sequence is Isopentenyl-diphosphate Delta-isomerase (189 aa).

Positions 27 and 34 each coordinate Mn(2+). One can recognise a Nudix hydrolase domain in the interval 32-171 (PLHFAFSTYI…PFVFSPWMVD (140 aa)). The active site involves Cys69. Position 71 (His71) interacts with Mn(2+). A Mg(2+)-binding site is contributed by Glu89. Positions 119 and 121 each coordinate Mn(2+). Glu121 is an active-site residue.

The protein belongs to the IPP isomerase type 1 family. The cofactor is Mg(2+). It depends on Mn(2+) as a cofactor.

The protein resides in the cytoplasm. It catalyses the reaction isopentenyl diphosphate = dimethylallyl diphosphate. It participates in isoprenoid biosynthesis; dimethylallyl diphosphate biosynthesis; dimethylallyl diphosphate from isopentenyl diphosphate: step 1/1. Catalyzes the 1,3-allylic rearrangement of the homoallylic substrate isopentenyl (IPP) to its highly electrophilic allylic isomer, dimethylallyl diphosphate (DMAPP). The protein is Isopentenyl-diphosphate Delta-isomerase of Corynebacterium glutamicum (strain R).